The primary structure comprises 860 residues: Spindle and centriole-associated protein 1 (860 aa).

Disordered regions lie at residues 160–200 (ESVI…SQSN), 232–254 (QSQM…QKAA), and 293–330 (KQLL…SSSN). A Phosphothreonine modification is found at Thr236. Positions 236–249 (TASSGTPSSASPSG) are enriched in low complexity. The span at 308–330 (PSKQKSSMLSASTASTDLPSSSN) shows a compositional bias: polar residues. A coiled-coil region spans residues 383–437 (RYLKESELQLRKEVETRQRLEEALGDHRELIDALTAEVLFLREENTATQARLQQY). The residue at position 646 (Ser646) is a Phosphoserine. A coiled-coil region spans residues 729–755 (SSMEERIAELNRQSMEARGKLLQLIEQ). Phosphoserine occurs at positions 765, 769, and 824. A disordered region spans residues 790–860 (IPGAEAPESS…GWFALSTHVS (71 aa)). The span at 808 to 824 (SGLNSRRSSGAASNSCS) shows a compositional bias: low complexity.

Interacts with CEP120.

The protein localises to the cytoplasm. It localises to the cytoskeleton. Its subcellular location is the microtubule organizing center. It is found in the centrosome. The protein resides in the centriole. The protein localises to the spindle. In terms of biological role, regulator required for centriole duplication. for proper bipolar spindle formation and chromosome congression in mitosis. The chain is Spindle and centriole-associated protein 1 (SPICE1) from Bos taurus (Bovine).